Here is a 373-residue protein sequence, read N- to C-terminus: Protein SENSITIVE TO PROTON RHIZOTOXICITY 2 (373 aa).

C2H2-type zinc fingers lie at residues 217 to 239 (HYCQ…MRAH) and 327 to 362 (KHCG…VPAH).

As to expression, expressed at low levels in roots (e.g. root tips and lateral roots), leaves (e.g. at the edge of mature leaves, possibly in hydathodes, and in vascular bundles), flowers (e.g. floral filaments), stems, siliques and cotyledons.

It localises to the nucleus. In terms of biological role, probable transcription factor. Together with STOP1, plays a critical role in tolerance to major stress factors in acid soils such as proton H(+) and aluminum ion Al(3+). Required for the expression of genes in response to acidic stress (e.g. ALMT1 and MATE), and Al-activated citrate exudation. The chain is Protein SENSITIVE TO PROTON RHIZOTOXICITY 2 from Arabidopsis thaliana (Mouse-ear cress).